Here is a 394-residue protein sequence, read N- to C-terminus: Exodeoxyribonuclease 7 large subunit (394 aa).

This sequence belongs to the XseA family. In terms of assembly, heterooligomer composed of large and small subunits.

Its subcellular location is the cytoplasm. The catalysed reaction is Exonucleolytic cleavage in either 5'- to 3'- or 3'- to 5'-direction to yield nucleoside 5'-phosphates.. Its function is as follows. Bidirectionally degrades single-stranded DNA into large acid-insoluble oligonucleotides, which are then degraded further into small acid-soluble oligonucleotides. This chain is Exodeoxyribonuclease 7 large subunit, found in Thermotoga maritima (strain ATCC 43589 / DSM 3109 / JCM 10099 / NBRC 100826 / MSB8).